Consider the following 187-residue polypeptide: MPKINGNEIRPGNVLEHNGGLWAAVKVDHVKPGKGGAFAQVELRNLRNGSKLNERFRSADKVERVRLEQKDQQFLYESDGMLVFMDAETYEQIELPAELLGERRPFLQDGMTIVVEFHDDEALNASLPQKVVCKVVETEPVVKGQTAANSFKPAILDNGVKVMVPPFVGQDEDIVVNTETMDYSERA.

It belongs to the elongation factor P family.

It localises to the cytoplasm. Its pathway is protein biosynthesis; polypeptide chain elongation. In terms of biological role, involved in peptide bond synthesis. Stimulates efficient translation and peptide-bond synthesis on native or reconstituted 70S ribosomes in vitro. Probably functions indirectly by altering the affinity of the ribosome for aminoacyl-tRNA, thus increasing their reactivity as acceptors for peptidyl transferase. In Jannaschia sp. (strain CCS1), this protein is Elongation factor P.